We begin with the raw amino-acid sequence, 80 residues long: Large ribosomal subunit protein eL14 (80 aa).

This sequence belongs to the eukaryotic ribosomal protein eL14 family.

This chain is Large ribosomal subunit protein eL14, found in Methanocaldococcus jannaschii (strain ATCC 43067 / DSM 2661 / JAL-1 / JCM 10045 / NBRC 100440) (Methanococcus jannaschii).